We begin with the raw amino-acid sequence, 360 residues long: Metalloendoproteinase 5-MMP (360 aa).

The first 20 residues, 1–20 (MRTLLLTILIFFFTVNPISA), serve as a signal peptide directing secretion. Positions 21–142 (KFYTNVSSIP…GGKILRTTEK (122 aa)) are cleaved as a propeptide — activation peptide. Residues Asn-25, Asn-36, and Asn-78 are each glycosylated (N-linked (GlcNAc...) asparagine). The short motif at 117–124 (PRCGNPDL) is the Cysteine switch element. Residue Cys-119 coordinates Zn(2+). 2 N-linked (GlcNAc...) asparagine glycosylation sites follow: Asn-168 and Asn-191. His-270 is a binding site for Zn(2+). The active site involves Glu-271. Positions 274 and 280 each coordinate Zn(2+). The disordered stretch occupies residues 312-336 (LYGGNPNGDGGGSKPSRESQSTGGD). Ser-337 carries GPI-anchor amidated serine lipidation. Residues 338-360 (VRRWRGWMISLSSIATCIFLISV) constitute a propeptide, removed in mature form.

The protein belongs to the peptidase M10A family. Matrix metalloproteinases (MMPs) subfamily. Zn(2+) serves as cofactor. Mostly expressed in leaves, roots and stems, and, to a lower extent, in flowers.

It localises to the cell membrane. With respect to regulation, repressed by acetohydroxamic acid (AHA). Functionally, matrix metalloproteinases (MMPs) or matrixins may play a role in the degradation and remodeling of the extracellular matrix (ECM) during development or in response to stresses. Active on Mca-KESAbuNLFVLKDpaR-NH(2) (QF75) and, to some extent, on McaPLGLDpaAR-NH(2) (QF24), myelin basic protein (MBP) and beta-casein. This is Metalloendoproteinase 5-MMP from Arabidopsis thaliana (Mouse-ear cress).